The sequence spans 350 residues: Casein kinase II subunit alpha' (350 aa).

The 286-residue stretch at 40 to 325 folds into the Protein kinase domain; that stretch reads YQLVRKLGRG…AKEAMEHPYF (286 aa). ATP-binding positions include 46 to 54 and Lys69; that span reads LGRGKYSEV. The Proton acceptor role is filled by Asp157.

Belongs to the protein kinase superfamily. Ser/Thr protein kinase family. CK2 subfamily. As to quaternary structure, tetramer composed of an alpha chain, an alpha' and two beta chains.

It carries out the reaction L-seryl-[protein] + ATP = O-phospho-L-seryl-[protein] + ADP + H(+). The enzyme catalyses L-threonyl-[protein] + ATP = O-phospho-L-threonyl-[protein] + ADP + H(+). Casein kinases are operationally defined by their preferential utilization of acidic proteins such as caseins as substrates. The alpha and alpha' chains contain the catalytic site. Participates in Wnt signaling. The sequence is that of Casein kinase II subunit alpha' from Gallus gallus (Chicken).